We begin with the raw amino-acid sequence, 320 residues long: MKTVRGFASATVGNVACGFDVLGFAITEPGDEVILTLHEERKSECPVSITAISGDGGALPLDPKKNTSSFVVLKFLEYIRTSKGIDFKGHIDLELKKNLPLSSGMGSSAASAAAALAAANELLGQPCSKMELVHFAVEGERVACGSAHADNAAPAILGNFVLIRSYAPLDLITIPSPEHLFCTLVHPHTELKTSFARSVLPRSIPLKTATQQWGNVGALIAGLLKSDYDLIGRALVDVVAEPKRAPLIPGFLDVKHAAIDCGALGCSIAGSGPSVFAFSSSKETAERVGQAMREAFLLPETNLKSDMWVSPICKEGAKVL.

100–110 contacts ATP; the sequence is PLSSGMGSSAA.

It belongs to the GHMP kinase family. Homoserine kinase subfamily.

Its subcellular location is the cytoplasm. It catalyses the reaction L-homoserine + ATP = O-phospho-L-homoserine + ADP + H(+). Its pathway is amino-acid biosynthesis; L-threonine biosynthesis; L-threonine from L-aspartate: step 4/5. In terms of biological role, catalyzes the ATP-dependent phosphorylation of L-homoserine to L-homoserine phosphate. This Chlorobium phaeobacteroides (strain DSM 266 / SMG 266 / 2430) protein is Homoserine kinase.